The chain runs to 3179 residues: Guanylate cyclase beta (3179 aa).

Residues Met1–Leu60 are Cytoplasmic-facing. The helical transmembrane segment at Ile61–Ile81 threads the bilayer. Residues Asn82–Lys88 are Extracellular-facing. The helical transmembrane segment at Tyr89–Glu109 threads the bilayer. Residues Ser110–Tyr295 lie on the Cytoplasmic side of the membrane. Residues Tyr296 to Phe316 form a helical membrane-spanning segment. Topologically, residues His317–Ser328 are extracellular. A helical transmembrane segment spans residues Phe329–Tyr349. The Cytoplasmic segment spans residues Ser350–Lys988. Residues Val989–Phe1009 form a helical membrane-spanning segment. Over Asp1010–Ser1020 the chain is Extracellular. A helical transmembrane segment spans residues Ile1021–Ala1041. At Tyr1042–Asn1069 the chain is on the cytoplasmic side. Residues Asn1070–Leu1090 traverse the membrane as a helical segment. The Extracellular portion of the chain corresponds to Arg1091–Glu1102. A helical membrane pass occupies residues Phe1103 to Ser1123. Residues Lys1124 to His1127 lie on the Cytoplasmic side of the membrane. A helical transmembrane segment spans residues Ile1128–Phe1148. Topologically, residues Thr1149 to Asn1168 are extracellular. A helical transmembrane segment spans residues Ile1169–Met1189. Residues Lys1190–Arg1304 lie on the Cytoplasmic side of the membrane. Residues Ile1305–Asp1325 form a helical membrane-spanning segment. At Ile1326–Asn1331 the chain is on the extracellular side. A helical transmembrane segment spans residues Ile1332–Tyr1352. Topologically, residues Ile1353–Thr1360 are cytoplasmic. The chain crosses the membrane as a helical span at residues Ser1361–Tyr1381. Topologically, residues Asp1382–Tyr1401 are extracellular. An N-linked (GlcNAc...) asparagine glycan is attached at Asn1383. A helical membrane pass occupies residues Ile1402 to Leu1422. Residues Thr1423–Gln1464 lie on the Cytoplasmic side of the membrane. A helical membrane pass occupies residues Ile1465 to Tyr1485. Residues Glu1486–Gln1507 lie on the Extracellular side of the membrane. Residues Ile1508–Pro1528 form a helical membrane-spanning segment. The Cytoplasmic segment spans residues Lys1529–Leu2739. One can recognise a Guanylate cyclase 1 domain in the interval Ser1548–Lys1700. Disordered stretches follow at residues Leu2123–Ser2153, Ser2355–Lys2379, and Lys2576–Ser2656. Residues Asn2131–Val2142 show a composition bias toward basic residues. Positions Asn2584–Ile2607 are enriched in low complexity. The segment covering His2614–His2645 has biased composition (basic residues). The chain crosses the membrane as a helical span at residues Ile2740–Phe2760. Residues Tyr2761–Ser2770 lie on the Extracellular side of the membrane. Asn2768 carries N-linked (GlcNAc...) asparagine glycosylation. Residues Ile2771–Ile2791 traverse the membrane as a helical segment. Over Leu2792 to Thr2809 the chain is Cytoplasmic. The chain crosses the membrane as a helical span at residues Ile2810–Ile2830. Residues His2831 to Arg2842 are Extracellular-facing. A helical membrane pass occupies residues Ala2843 to Lys2863. At Asn2864 to Lys2870 the chain is on the cytoplasmic side. A helical membrane pass occupies residues Phe2871–Ile2891. The Extracellular segment spans residues His2892 to Gln2895. A helical transmembrane segment spans residues Thr2896 to Ser2916. Over Glu2917–Ser3179 the chain is Cytoplasmic. One can recognise a Guanylate cyclase 2 domain in the interval Ala2968–Glu3102. The Mg(2+) site is built by Asp2973, Ile2974, and Asp3017.

The protein in the N-terminal section; belongs to the cation transport ATPase (P-type) (TC 3.A.3) family. Type IV subfamily. This sequence in the C-terminal section; belongs to the adenylyl cyclase class-4/guanylyl cyclase family. The cofactor is Mg(2+). Requires Mn(2+) as cofactor.

Its subcellular location is the membrane. It carries out the reaction GTP = 3',5'-cyclic GMP + diphosphate. Basal guanylate activity of the recombinant guanylate cyclase domains 1 and 2 is not modulated by an increase in Ca(2+) levels or by the gametogenesis inducer xanthurenic acid. Functionally, catalyzes the synthesis of the second messenger cGMP from GTP. Regulates cGMP production in gametocytes; however, is dispensable for the initiation of gametogenesis. Does not have adenylate cyclase activity. This is Guanylate cyclase beta from Plasmodium falciparum (isolate 3D7).